Here is a 286-residue protein sequence, read N- to C-terminus: 3-methyl-2-oxobutanoate hydroxymethyltransferase (286 aa).

Residues Asp-51 and Asp-90 each contribute to the Mg(2+) site. 3-methyl-2-oxobutanoate-binding positions include 51–52 (DS), Asp-90, and Lys-120. Glu-122 contacts Mg(2+). Catalysis depends on Glu-189, which acts as the Proton acceptor. The disordered stretch occupies residues 263-286 (TFPGPSHVFSGSKASSDLNGGDES).

The protein belongs to the PanB family. In terms of assembly, homodecamer; pentamer of dimers. The cofactor is Mg(2+).

The protein localises to the cytoplasm. The catalysed reaction is 3-methyl-2-oxobutanoate + (6R)-5,10-methylene-5,6,7,8-tetrahydrofolate + H2O = 2-dehydropantoate + (6S)-5,6,7,8-tetrahydrofolate. The protein operates within cofactor biosynthesis; (R)-pantothenate biosynthesis; (R)-pantoate from 3-methyl-2-oxobutanoate: step 1/2. Catalyzes the reversible reaction in which hydroxymethyl group from 5,10-methylenetetrahydrofolate is transferred onto alpha-ketoisovalerate to form ketopantoate. The chain is 3-methyl-2-oxobutanoate hydroxymethyltransferase from Mesorhizobium japonicum (strain LMG 29417 / CECT 9101 / MAFF 303099) (Mesorhizobium loti (strain MAFF 303099)).